Here is a 490-residue protein sequence, read N- to C-terminus: Probable cytosol aminopeptidase (490 aa).

Residues Lys255 and Asp260 each contribute to the Mn(2+) site. Residue Lys267 is part of the active site. Mn(2+) contacts are provided by Asp278, Asp337, and Glu339. Arg341 is a catalytic residue.

The protein belongs to the peptidase M17 family. The cofactor is Mn(2+).

The protein localises to the cytoplasm. It catalyses the reaction Release of an N-terminal amino acid, Xaa-|-Yaa-, in which Xaa is preferably Leu, but may be other amino acids including Pro although not Arg or Lys, and Yaa may be Pro. Amino acid amides and methyl esters are also readily hydrolyzed, but rates on arylamides are exceedingly low.. The enzyme catalyses Release of an N-terminal amino acid, preferentially leucine, but not glutamic or aspartic acids.. Its function is as follows. Presumably involved in the processing and regular turnover of intracellular proteins. Catalyzes the removal of unsubstituted N-terminal amino acids from various peptides. The polypeptide is Probable cytosol aminopeptidase (Gluconobacter oxydans (strain 621H) (Gluconobacter suboxydans)).